The sequence spans 181 residues: Crossover junction endodeoxyribonuclease RuvC (181 aa).

Active-site residues include Asp7, Glu67, and Asp139. 3 residues coordinate Mg(2+): Asp7, Glu67, and Asp139.

Belongs to the RuvC family. As to quaternary structure, homodimer which binds Holliday junction (HJ) DNA. The HJ becomes 2-fold symmetrical on binding to RuvC with unstacked arms; it has a different conformation from HJ DNA in complex with RuvA. In the full resolvosome a probable DNA-RuvA(4)-RuvB(12)-RuvC(2) complex forms which resolves the HJ. The cofactor is Mg(2+).

It localises to the cytoplasm. It catalyses the reaction Endonucleolytic cleavage at a junction such as a reciprocal single-stranded crossover between two homologous DNA duplexes (Holliday junction).. The RuvA-RuvB-RuvC complex processes Holliday junction (HJ) DNA during genetic recombination and DNA repair. Endonuclease that resolves HJ intermediates. Cleaves cruciform DNA by making single-stranded nicks across the HJ at symmetrical positions within the homologous arms, yielding a 5'-phosphate and a 3'-hydroxyl group; requires a central core of homology in the junction. The consensus cleavage sequence is 5'-(A/T)TT(C/G)-3'. Cleavage occurs on the 3'-side of the TT dinucleotide at the point of strand exchange. HJ branch migration catalyzed by RuvA-RuvB allows RuvC to scan DNA until it finds its consensus sequence, where it cleaves and resolves the cruciform DNA. The polypeptide is Crossover junction endodeoxyribonuclease RuvC (Cupriavidus metallidurans (strain ATCC 43123 / DSM 2839 / NBRC 102507 / CH34) (Ralstonia metallidurans)).